The chain runs to 468 residues: Hepatocyte nuclear factor 3-alpha (468 aa).

The fork-head DNA-binding region spans 169-260; the sequence is AKPPYSYISL…GNMFENGCYL (92 aa). Residues 251 to 288 are essential for DNA binding; it reads GNMFENGCYLRRQKRFKCEKQPGAGGGSGGGGSKGGPE. The disordered stretch occupies residues 269–396; sequence EKQPGAGGGS…DPHYSFNHPF (128 aa). The span at 273–285 shows a compositional bias: gly residues; it reads GAGGGSGGGGSKG. Phosphoserine occurs at positions 303 and 327. Composition is skewed to low complexity over residues 318 to 328 and 347 to 365; these read GAPAPGPAASP and SPASSSAPPISSGPGALAS.

In terms of assembly, binds DNA as a monomer. Interacts with FOXA2. Interacts with NKX2-1. Interacts with HDAC7. Interacts with the histone H3-H4 heterodimer. Associates with nucleosomes containing histone H2A. Interacts with AR. Interacts with NR0B2. In terms of tissue distribution, restricted mainly to endoderm-derived tissues (lung, liver, stomach, and small intestine). Expressed in the prostate.

It is found in the nucleus. Its function is as follows. Transcription factor that is involved in embryonic development, establishment of tissue-specific gene expression and regulation of gene expression in differentiated tissues. Is thought to act as a 'pioneer' factor opening the compacted chromatin for other proteins through interactions with nucleosomal core histones and thereby replacing linker histones at target enhancer and/or promoter sites. Binds DNA with the consensus sequence 5'-[AC]A[AT]T[AG]TT[GT][AG][CT]T[CT]-3'. Proposed to play a role in translating the epigenetic signatures into cell type-specific enhancer-driven transcriptional programs. Involved in the development of multiple endoderm-derived organ systems such as the liver, pancreas, lungs and prostate; FOXA1 and FOXA2 seem to have at least in part redundant roles. Plays a role in prostate morphogenesis and epithelial cell differentiation. FOXA1 and FOXA2 are essential for hepatic specification. FOXA1 and FOXA2 are required for morphogenesis and cell differentiation during formation of the lung. FOXA1 and FOXA2 are involved in bile duct formation; they positively regulate the binding of glucocorticoid receptor/NR3C1 to the IL6 promoter. FOXA1 and FOXA2 regulate multiple phases of midbrain dopaminergic neuron development; they regulate expression of NEUROG2 at the beginning of mDA neurogenesis and of NR4A2 and EN1 in immature mDA neurons. Modulates the transcriptional activity of nuclear hormone receptors. Is involved in ESR1-mediated transcription. Inhibits NKX2-1-mediated transcription from the SFTPC promoter in lung epithel independently from DNA-binding. Involved in regulation of apoptosis. Involved in cell cycle regulation. Originally described as a transcription activator for a number of liver genes such as AFP, albumin, tyrosine aminotransferase, PEPCK, etc. Interacts with the cis-acting regulatory regions of these genes. Involved in glucose homeostasis; activates the GCG promoter. In Mus musculus (Mouse), this protein is Hepatocyte nuclear factor 3-alpha (Foxa1).